Here is a 537-residue protein sequence, read N- to C-terminus: Synaptotagmin-C (537 aa).

The Vesicular portion of the chain corresponds to 1-52 (MSGDGEDELCRNALALVNELCFSVRGNHNNEKCIEFSYLLRDRDRTRHIETD). Residues 53 to 78 (ISVSLLSVIVTFCGIVLLGVSLFVSW) form a helical membrane-spanning segment. The Cytoplasmic segment spans residues 79-537 (KLCWIPWRDK…TIVVESPHSV (459 aa)). Disordered stretches follow at residues 92 to 111 (PQRRDSQHHPHQHLHHHHSH) and 142 to 200 (IKLS…EFGT). Over residues 100–110 (HPHQHLHHHHS) the composition is skewed to basic residues. Residues 143 to 174 (KLSQTSPDIPVDTSSGSKENNIPNAHSQQQVS) show a composition bias toward polar residues. The interval 228 to 477 (EAKKHQKVNC…VIGMCRVGNA (250 aa)) is phospholipid binding. 2 C2 domains span residues 236 to 357 (NCGR…TIWR) and 368 to 501 (DLGE…EQWH). Ca(2+) contacts are provided by Asp267, Asp273, Asp325, Phe326, Asp327, Ser330, Asp333, Asp399, Asp405, Asp459, and Asp461.

This sequence belongs to the synaptotagmin family. In terms of assembly, homodimer or homotrimer (possible). Ca(2+) is required as a cofactor.

The protein resides in the cytoplasmic vesicle. The protein localises to the secretory vesicle. Its subcellular location is the synaptic vesicle membrane. It localises to the synapse. Functionally, may have a regulatory role in the membrane interactions during trafficking of synaptic vesicles at the active zone of the synapse. It binds acidic phospholipids with a specificity that requires the presence of both an acidic head group and a diacyl backbone. This chain is Synaptotagmin-C (P65-C), found in Diplobatis ommata (Ocellated electric ray).